The chain runs to 132 residues: Protein NrdI (132 aa).

This sequence belongs to the NrdI family.

Functionally, probably involved in ribonucleotide reductase function. The sequence is that of Protein NrdI from Staphylococcus aureus (strain Mu3 / ATCC 700698).